Reading from the N-terminus, the 106-residue chain is Integration host factor subunit alpha (106 aa).

Belongs to the bacterial histone-like protein family. In terms of assembly, heterodimer of an alpha and a beta chain.

In terms of biological role, this protein is one of the two subunits of integration host factor, a specific DNA-binding protein that functions in genetic recombination as well as in transcriptional and translational control. The polypeptide is Integration host factor subunit alpha (Paramagnetospirillum magneticum (strain ATCC 700264 / AMB-1) (Magnetospirillum magneticum)).